A 347-amino-acid polypeptide reads, in one-letter code: NADH-ubiquinone oxidoreductase chain 2 (347 aa).

The next 10 helical transmembrane spans lie at 13–33, 59–79, 84–104, 111–131, 149–169, 178–198, 201–221, 240–260, 276–296, and 326–346; these read IILGTSIVITSSHWLTVWIGF, YFLIQATASMLLMLAVTINLL, WAVSNMIDPLALTIMTLALAM, FHFWVPEVTQGVPLLSGLILL, IDPTLILTMSILSVLVGGWGG, IMAYSSISHMGWMTAILIYNP, TILNLLLYIMMTSTTFILLII, IAIIILTTMLSLGGLPPLTGF, IALSLFMAMAALLNLYFYTRL, and LSPLIIISTMILPLTPTMSAL.

This sequence belongs to the complex I subunit 2 family. In terms of assembly, core subunit of respiratory chain NADH dehydrogenase (Complex I) which is composed of 45 different subunits. Interacts with TMEM242.

It localises to the mitochondrion inner membrane. It catalyses the reaction a ubiquinone + NADH + 5 H(+)(in) = a ubiquinol + NAD(+) + 4 H(+)(out). In terms of biological role, core subunit of the mitochondrial membrane respiratory chain NADH dehydrogenase (Complex I) that is believed to belong to the minimal assembly required for catalysis. Complex I functions in the transfer of electrons from NADH to the respiratory chain. The immediate electron acceptor for the enzyme is believed to be ubiquinone. This chain is NADH-ubiquinone oxidoreductase chain 2, found in Chrotopterus auritus (Peters's woolly false vampire bat).